We begin with the raw amino-acid sequence, 180 residues long: Bifunctional protein PyrR (180 aa).

A PRPP-binding motif is present at residues 101-113; sequence VVLVDDVIFKGRT.

This sequence belongs to the purine/pyrimidine phosphoribosyltransferase family. PyrR subfamily.

The catalysed reaction is UMP + diphosphate = 5-phospho-alpha-D-ribose 1-diphosphate + uracil. Functionally, regulates the transcription of the pyrimidine nucleotide (pyr) operon in response to exogenous pyrimidines. In terms of biological role, also displays a weak uracil phosphoribosyltransferase activity which is not physiologically significant. This Trichormus variabilis (strain ATCC 29413 / PCC 7937) (Anabaena variabilis) protein is Bifunctional protein PyrR.